Here is a 277-residue protein sequence, read N- to C-terminus: Zaragozic acid A biosynthesis cluster protein 1 (277 aa).

The protein operates within secondary metabolite biosynthesis. In terms of biological role, part of the gene cluster that mediates the biosynthesis of squalestatin S1 (SQS1, also known as zaragozic acid A), a heavily oxidized fungal polyketide that offers potent cholesterol lowering activity by targeting squalene synthase (SS). SQS1 is composed of a 2,8-dioxobicyclic[3.2.1]octane-3,4,5-tricarboxyclic acid core that is connected to two lipophilic polyketide arms. These initial steps feature the priming of an unusual benzoic acid starter unit onto the highly reducing polyketide synthase clz14, followed by oxaloacetate extension and product release to generate a tricarboxylic acid containing product. The phenylalanine ammonia lyase (PAL) clz10 and the acyl-CoA ligase clz12 are involved in transforming phenylalanine into benzoyl-CoA. The citrate synthase-like protein clz17 is involved in connecting the C-alpha-carbons of the hexaketide chain and oxaloacetate to afford the tricarboxylic acid unit. The potential hydrolytic enzymes, clz11 and clz13, are in close proximity to pks2 and may participate in product release. On the other side, the tetraketide arm is synthesized by a the squalestatin tetraketide synthase clz2 and enzymatically esterified to the core in the last biosynthetic step, by the acetyltransferase clz6. The biosynthesis of the tetraketide must involve 3 rounds of chain extension. After the first and second rounds methyl-transfer occurs, and in all rounds of extension the ketoreductase and dehydratase are active. The enoyl reductase and C-MeT of clz2 are not active in the final round of extension. The acetyltransferase clz6 appears to have a broad substrate selectivity for its acyl CoA substrate, allowing the in vitro synthesis of novel squalestatins. The biosynthesis of SQS1 requires several oxidative steps likely performed by oxidoreductases clz3, clz15 and clz16. Finally, in support of the identification of the cluster as being responsible for SQS1 production, the cluster contains a gene encoding a putative squalene synthase (SS) clz20, suggesting a likely mechanism for self-resistance. The protein is Zaragozic acid A biosynthesis cluster protein 1 of Cochliobolus lunatus (Filamentous fungus).